The following is a 122-amino-acid chain: Holo-[acyl-carrier-protein] synthase (122 aa).

Mg(2+) is bound by residues D8 and E52.

This sequence belongs to the P-Pant transferase superfamily. AcpS family. Requires Mg(2+) as cofactor.

Its subcellular location is the cytoplasm. The catalysed reaction is apo-[ACP] + CoA = holo-[ACP] + adenosine 3',5'-bisphosphate + H(+). Transfers the 4'-phosphopantetheine moiety from coenzyme A to a Ser of acyl-carrier-protein. This chain is Holo-[acyl-carrier-protein] synthase, found in Lachnoclostridium phytofermentans (strain ATCC 700394 / DSM 18823 / ISDg) (Clostridium phytofermentans).